We begin with the raw amino-acid sequence, 537 residues long: Oocyte zinc finger protein XlCOF29 (537 aa).

The tract at residues 1-21 (MGMSEKASDTGMKGKKKDKNE) is disordered. C2H2-type zinc fingers lie at residues 375–397 (FTCS…LKSH), 403–425 (FSCS…RRLH), 431–453 (FPCA…SKTH), 459–481 (YSCT…KKRH), 487–509 (YTCS…VRIH), and 515–537 (FSCS…ERMH).

It belongs to the krueppel C2H2-type zinc-finger protein family.

Its subcellular location is the nucleus. In terms of biological role, may be involved in transcriptional regulation. This chain is Oocyte zinc finger protein XlCOF29, found in Xenopus laevis (African clawed frog).